The sequence spans 194 residues: A-type ATP synthase subunit E (194 aa).

Belongs to the V-ATPase E subunit family. In terms of assembly, has multiple subunits with at least A(3), B(3), C, D, E, F, H, I and proteolipid K(x).

It localises to the cell membrane. Functionally, component of the A-type ATP synthase that produces ATP from ADP in the presence of a proton gradient across the membrane. The polypeptide is A-type ATP synthase subunit E (Saccharolobus islandicus (strain Y.N.15.51 / Yellowstone #2) (Sulfolobus islandicus)).